We begin with the raw amino-acid sequence, 200 residues long: Pyridoxal 5'-phosphate synthase subunit PdxT (200 aa).

52–54 (GES) serves as a coordination point for L-glutamine. Catalysis depends on Cys84, which acts as the Nucleophile. Residues Arg116 and 145–146 (IR) each bind L-glutamine. Active-site charge relay system residues include His181 and Glu183.

Belongs to the glutaminase PdxT/SNO family. As to quaternary structure, in the presence of PdxS, forms a dodecamer of heterodimers. Only shows activity in the heterodimer.

It catalyses the reaction aldehydo-D-ribose 5-phosphate + D-glyceraldehyde 3-phosphate + L-glutamine = pyridoxal 5'-phosphate + L-glutamate + phosphate + 3 H2O + H(+). The catalysed reaction is L-glutamine + H2O = L-glutamate + NH4(+). The protein operates within cofactor biosynthesis; pyridoxal 5'-phosphate biosynthesis. Functionally, catalyzes the hydrolysis of glutamine to glutamate and ammonia as part of the biosynthesis of pyridoxal 5'-phosphate. The resulting ammonia molecule is channeled to the active site of PdxS. The chain is Pyridoxal 5'-phosphate synthase subunit PdxT from Saccharolobus islandicus (strain Y.G.57.14 / Yellowstone #1) (Sulfolobus islandicus).